The chain runs to 203 residues: Probable GTP-binding protein EngB (203 aa).

One can recognise an EngB-type G domain in the interval 24-199; that stretch reads DGSEVAFAGR…HTVIETWLGL (176 aa). Residues 32–39, 59–63, 77–80, 144–147, and 178–180 contribute to the GTP site; these read GRSNAGKS, GRTQQ, DLPG, TKAD, and FSS. Positions 39 and 61 each coordinate Mg(2+).

Belongs to the TRAFAC class TrmE-Era-EngA-EngB-Septin-like GTPase superfamily. EngB GTPase family. The cofactor is Mg(2+).

In terms of biological role, necessary for normal cell division and for the maintenance of normal septation. The chain is Probable GTP-binding protein EngB from Xylella fastidiosa (strain Temecula1 / ATCC 700964).